A 144-amino-acid chain; its full sequence is Large ribosomal subunit protein uL13 (144 aa).

Belongs to the universal ribosomal protein uL13 family. Part of the 50S ribosomal subunit.

In terms of biological role, this protein is one of the early assembly proteins of the 50S ribosomal subunit, although it is not seen to bind rRNA by itself. It is important during the early stages of 50S assembly. The protein is Large ribosomal subunit protein uL13 of Moorella thermoacetica (strain ATCC 39073 / JCM 9320).